The following is a 78-amino-acid chain: Large ribosomal subunit protein bL28 (78 aa).

Residues 1-33 form a disordered region; sequence MARKDDVTGEGPVTGNSVSDSNQKTNRRFKRNL. Polar residues predominate over residues 14-24; that stretch reads TGNSVSDSNQK.

This sequence belongs to the bacterial ribosomal protein bL28 family.

The sequence is that of Large ribosomal subunit protein bL28 from Salinibacter ruber (strain DSM 13855 / M31).